A 341-amino-acid polypeptide reads, in one-letter code: Short chain dehydrogenase FGM9 (341 aa).

The NADP(+) site is built by Leu38, Lys63, Asp88, and Asn114. Residues Ser167 and Tyr200 each act as proton donor in the active site. Residues Tyr200 and Lys204 each contribute to the NADP(+) site. The Lowers pKa of active site Tyr role is filled by Lys204.

It belongs to the short-chain dehydrogenases/reductases (SDR) family.

It participates in secondary metabolite biosynthesis. In terms of biological role, short chain dehydrogenase; part of the Fg3_54/C64 gene cluster that mediates the biosynthesis of the octapeptide fusaoctaxin A, a virulence factor that is required for cell-to-cell invasiveness of plant host. The 2 nonribosomal peptide synthetases NRPS9 and NRPS5 form an assembly line which likely utilizes GABA as a starter unit (loaded on the unique module M1 of NRPS9) and sequentially incorporates seven extender units composed of the residues L-Ala, L-allo-Ile, L-Ser, L-Val, L-Ser, L-Leu and L-Leu, respectively. During the process, each of the residues that are tethered on modules M3-M7 of NRPS5 containing an E domain can undergo an epimerization reaction to produce a D-configuration before the transpeptidation reaction occurs. The elongation of the peptidyl chain might be terminated by module M8-mediated L-Leu incorporation, followed by R domain-catalyzed 4 electron reduction to release the resulting octapeptide from the assembly line as an alcohol. Fusaoctaxin A is cleaved by the cluster specific ABC transporter FGM5 to the pentapeptide fusapentaxin A and the tripeptide fusatrixin A. The other enzymes from the cluster, FGM1, FGM2, FGM3 and FGM9 seem not to be involved in the biosynthesis of fusaoctaxin A and their functions have still to be determined. In Gibberella zeae (strain ATCC MYA-4620 / CBS 123657 / FGSC 9075 / NRRL 31084 / PH-1) (Wheat head blight fungus), this protein is Short chain dehydrogenase FGM9.